Consider the following 158-residue polypeptide: SsrA-binding protein (158 aa).

This sequence belongs to the SmpB family.

Its subcellular location is the cytoplasm. Required for rescue of stalled ribosomes mediated by trans-translation. Binds to transfer-messenger RNA (tmRNA), required for stable association of tmRNA with ribosomes. tmRNA and SmpB together mimic tRNA shape, replacing the anticodon stem-loop with SmpB. tmRNA is encoded by the ssrA gene; the 2 termini fold to resemble tRNA(Ala) and it encodes a 'tag peptide', a short internal open reading frame. During trans-translation Ala-aminoacylated tmRNA acts like a tRNA, entering the A-site of stalled ribosomes, displacing the stalled mRNA. The ribosome then switches to translate the ORF on the tmRNA; the nascent peptide is terminated with the 'tag peptide' encoded by the tmRNA and targeted for degradation. The ribosome is freed to recommence translation, which seems to be the essential function of trans-translation. The polypeptide is SsrA-binding protein (Acinetobacter baumannii (strain AB307-0294)).